Here is a 953-residue protein sequence, read N- to C-terminus: MALVFQFGQPVRAQPLPGLCHGKLIRTNACDVCNSTDLPEVEIISLLEEQLPHYKLRADTIYGYDHDDWLHTPLISPDANIDLTTEQIEETLKYFLLCAERVGQMTKTYNDIDAVTRLLEEKERDLELAARIGQSLLKKNKTLTERNELLEEQVEHIREEVSQLRHELSMKDELLQFYTSAAEESEPESVCSTPLKRNESSSSVQNYFHLDSLQKKLKDLEEENVVLRSEASQLKTETITYEEKEQQLVNDCVKELRDANVQIASISEELAKKTEDAARQQEEITHLLSQIVDLQKKAKACAVENEELVQHLGAAKDAQRQLTAELRELEDKYAECMEMLHEAQEELKNLRNKTMPNTTSRRYHSLGLFPMDSLAAEIEGTMRKELQLEEAESPDITHQKRVFETVRNINQVVKQRSLTPSPMNIPGSNQSSAMNSLLSSCVSTPRSSFYGSDIGNVVLDNKTNSIILETEAADLGNDERSKKPGTPGTPGSHDLETALRRLSLRRENYLSERRFFEEEQERKLQELAEKGELRSGSLTPTESIMSLGTHSRFSEFTGFSGMSFSSRSYLPEKLQIVKPLEGSATLHHWQQLAQPHLGGILDPRPGVVTKGFRTLDVDLDEVYCLNDFEEDDTGDHISLPRLATSTPVQHPETSAHHPGKCMSQTNSTFTFTTCRILHPSDELTRVTPSLNSAPTPACGSTSHLKSTPVATPCTPRRLSLAESFTNTRESTTTMSTSLGLVWLLKERGISAAVYDPQSWDRAGRGSLLHSYTPKMAVIPSTPPNSPMQTPTSSPPSFEFKCTSPPYDNFLASKPASSILREVREKNVRSSESQTDVSVSNLNLVDKVRRFGVAKVVNSGRAHVPTLTEEQGPLLCGPPGPAPALVPRGLVPEGLPLRCPTVTSAIGGLQLNSGIRRNRSFPTMVGSSMQMKAPVTLTSGILMGAKLSKQTSLR.

An HAP1 N-terminal domain is found at 47-354 (LEEQLPHYKL…EELKNLRNKT (308 aa)). The stretch at 104–356 (QMTKTYNDID…LKNLRNKTMP (253 aa)) forms a coiled coil. Positions 359-509 (TSRRYHSLGL…RRLSLRRENY (151 aa)) are interaction with HGS. The O-linked (GlcNAc) serine glycan is linked to Ser447. The segment at 472–495 (AADLGNDERSKKPGTPGTPGSHDL) is disordered. Residues 492–532 (SHDLETALRRLSLRRENYLSERRFFEEEQERKLQELAEKGE) adopt a coiled-coil conformation. A Phosphoserine modification is found at Ser537. Residues 658–672 (PGKCMSQTNSTFTFT) form an interaction with OGT region. O-linked (GlcNAc) serine glycosylation is found at Ser680 and Ser719. The residue at position 719 (Ser719) is a Phosphoserine. The disordered stretch occupies residues 777–796 (VIPSTPPNSPMQTPTSSPPS). The segment covering 786 to 796 (PMQTPTSSPPS) has biased composition (low complexity). Ser919 carries the post-translational modification Phosphoserine. Thr935 is a glycosylation site (O-linked (GlcNAc) threonine).

This sequence belongs to the milton family. As to quaternary structure, interacts with RHOT1 and RHOT2. Found in a complex with KIF5B, OGT, RHOT1 and RHOT2. Interacts with HGS. Interacts with GABRA1. Interacts with KIF5C. Interacts with OGT; stable interaction is not required for glycosylation of this protein by OGT. Isoform 1 interacts with OGT. Post-translationally, O-glycosylated. Glycosylated by OGT; glycosylation in response to increased extracellular glucose levels is required for and leads to regulation of mitochondrial motility by OGT. High expression in spinal cord and moderate expression in all other tissues and specific brain regions examined. Expressed in all cell lines examined.

The protein resides in the cytoplasm. It localises to the nucleus. Its subcellular location is the mitochondrion. It is found in the early endosome. The protein localises to the endosome. The protein resides in the mitochondrion membrane. It localises to the cell cortex. Involved in the regulation of endosome-to-lysosome trafficking, including endocytic trafficking of EGF-EGFR complexes and GABA-A receptors. Involved in mitochondrial motility. When O-glycosylated, abolishes mitochondrial motility. Crucial for recruiting OGT to the mitochondrial surface of neuronal processes. TRAK1 and RHOT form an essential protein complex that links KIF5 to mitochondria for light chain-independent, anterograde transport of mitochondria. This chain is Trafficking kinesin-binding protein 1 (TRAK1), found in Homo sapiens (Human).